The primary structure comprises 428 residues: Adenylosuccinate synthetase (428 aa).

Residues 12–18 and 40–42 each bind GTP; these read GDEGKGK and GHT. Residue Asp13 is the Proton acceptor of the active site. Residues Asp13 and Gly40 each contribute to the Mg(2+) site. IMP-binding positions include 13-16, 38-41, Thr128, Arg142, Gln223, Thr238, and Arg302; these read DEGK and NAGH. The Proton donor role is filled by His41. Residue 298–304 participates in substrate binding; it reads VTTGRPR. GTP-binding positions include Arg304, 330-332, and 413-415; these read KLD and GVG.

Belongs to the adenylosuccinate synthetase family. In terms of assembly, homodimer. Mg(2+) is required as a cofactor.

It is found in the cytoplasm. It carries out the reaction IMP + L-aspartate + GTP = N(6)-(1,2-dicarboxyethyl)-AMP + GDP + phosphate + 2 H(+). It functions in the pathway purine metabolism; AMP biosynthesis via de novo pathway; AMP from IMP: step 1/2. Its function is as follows. Plays an important role in the de novo pathway of purine nucleotide biosynthesis. Catalyzes the first committed step in the biosynthesis of AMP from IMP. The sequence is that of Adenylosuccinate synthetase from Acidothermus cellulolyticus (strain ATCC 43068 / DSM 8971 / 11B).